The following is a 347-amino-acid chain: Eukaryotic translation initiation factor 3 subunit I (347 aa).

WD repeat units lie at residues 8-49 (GHER…GTLD), 51-89 (HMGS…CVQT), 149-190 (THEG…KLVE), 194-233 (VHKD…VLKT), and 291-330 (GHFG…FDFK).

The protein belongs to the eIF-3 subunit I family. As to quaternary structure, component of the eukaryotic translation initiation factor 3 (eIF-3) complex.

It localises to the cytoplasm. Its function is as follows. Component of the eukaryotic translation initiation factor 3 (eIF-3) complex, which is involved in protein synthesis of a specialized repertoire of mRNAs and, together with other initiation factors, stimulates binding of mRNA and methionyl-tRNAi to the 40S ribosome. The eIF-3 complex specifically targets and initiates translation of a subset of mRNAs involved in cell proliferation. This is Eukaryotic translation initiation factor 3 subunit I from Candida glabrata (strain ATCC 2001 / BCRC 20586 / JCM 3761 / NBRC 0622 / NRRL Y-65 / CBS 138) (Yeast).